The primary structure comprises 88 residues: Large ribosomal subunit protein bL31B (88 aa).

It belongs to the bacterial ribosomal protein bL31 family. Type B subfamily. As to quaternary structure, part of the 50S ribosomal subunit.

The protein is Large ribosomal subunit protein bL31B of Leuconostoc mesenteroides subsp. mesenteroides (strain ATCC 8293 / DSM 20343 / BCRC 11652 / CCM 1803 / JCM 6124 / NCDO 523 / NBRC 100496 / NCIMB 8023 / NCTC 12954 / NRRL B-1118 / 37Y).